The primary structure comprises 309 residues: Putative ankyrin repeat protein R603 (309 aa).

ANK repeat units lie at residues 53–82 (QVNG…MNPE), 83–112 (NKSQ…DVSL), 114–144 (DHFA…DVTS), 145–176 (NNNL…DIHA), 177–206 (DEYF…DVNM), 214–243 (NVLS…DISF), and 245–274 (DDND…DISF).

The polypeptide is Putative ankyrin repeat protein R603 (Acanthamoeba polyphaga (Amoeba)).